A 156-amino-acid chain; its full sequence is Succinate dehydrogenase [ubiquinone] cytochrome b small subunit 1, mitochondrial (156 aa).

A mitochondrion-targeting transit peptide spans 1–25 (MLSAVRRAIPLSARILRTSLIQRCA). At 26-59 (GATSAAVTGAAPPQFDPIAAEKGFKPLHSHGTLF) the chain is on the mitochondrial matrix side. A helical transmembrane segment spans residues 60–78 (KIERYFAAAMVPLIPAAYF). Residues 79–83 (IHGRE) lie on the Mitochondrial intermembrane side of the membrane. Residues 84–104 (MDLCLALALTLHVHWGVWGVV) form a helical membrane-spanning segment. His95 lines the heme b pocket. Over 105 to 119 (NDYGRPFVLGDTLAA) the chain is Mitochondrial matrix. Position 107 (Tyr107) interacts with a rhodoquinol. Residues 120-141 (AVRVGAYIFTACLLAGLLYFNE) form a helical membrane-spanning segment. Residues 142–156 (HDVGLTRAFEMVWEL) lie on the Mitochondrial intermembrane side of the membrane.

This sequence belongs to the CybS family. In terms of assembly, component of the mitochondrial electron transport chain complex II composed of four subunits: a flavoprotein (Fp), an iron-sulfur protein (Ip), and a large cytochrome b (CybL) subunit and a small cytochrome b (CybS) subunit. There are 2 developmental stage-specific forms of complex II which have the Ip and CybL subunits in common. Complex II from the free-living larvae (aerobic environment) acts as a succinate dehydrogenase and is composed of the common subunit Ip and CybL and the stage specific subunits FpL and CybSL. Complex II from parasitic larvae and adults (anaerobic environment) acts as a fumarate reductase and is composed of the common subunit Ip and CybL and the stage specific subunits FpA and CybSA. It depends on heme b as a cofactor. As to expression, expressed in adult muscles (at protein level).

It is found in the mitochondrion inner membrane. Membrane-bound small subunit (CybS) of the mitochondrial electron transport chain complex II, which together with the membrane-bound large subunit (CybL), anchor the catalytic subunits to the inner mitochondria membrane. During the parasitic larvae and adult stages, which occur in an anaerobic environment, complex II acts as a fumarate reductase by transferring electrons from rhodoquinol to fumarate. The polypeptide is Succinate dehydrogenase [ubiquinone] cytochrome b small subunit 1, mitochondrial (Ascaris suum (Pig roundworm)).